Reading from the N-terminus, the 141-residue chain is Nucleoside diphosphate kinase (141 aa).

Residues lysine 11, phenylalanine 59, arginine 87, threonine 93, arginine 104, and asparagine 114 each coordinate ATP. The active-site Pros-phosphohistidine intermediate is histidine 117.

It belongs to the NDK family. Homotetramer. Requires Mg(2+) as cofactor.

The protein resides in the cytoplasm. The catalysed reaction is a 2'-deoxyribonucleoside 5'-diphosphate + ATP = a 2'-deoxyribonucleoside 5'-triphosphate + ADP. It catalyses the reaction a ribonucleoside 5'-diphosphate + ATP = a ribonucleoside 5'-triphosphate + ADP. In terms of biological role, major role in the synthesis of nucleoside triphosphates other than ATP. The ATP gamma phosphate is transferred to the NDP beta phosphate via a ping-pong mechanism, using a phosphorylated active-site intermediate. This Mannheimia succiniciproducens (strain KCTC 0769BP / MBEL55E) protein is Nucleoside diphosphate kinase.